The following is a 408-amino-acid chain: UDP-glucose 4-epimerase 2 (408 aa).

13-44 lines the NAD(+) pocket; it reads TVLVTGGAGYIGSHAVLQLLLAGFRAVVVDNL. Ser-138 contributes to the substrate binding site. Tyr-162 (proton acceptor) is an active-site residue. The tract at residues 369–408 is disordered; sequence GSPKQNGHCTNGFSESTRHNGHNGYGLVDSAKHNGNGHFH. Polar residues predominate over residues 370 to 383; the sequence is SPKQNGHCTNGFSE.

The protein belongs to the NAD(P)-dependent epimerase/dehydratase family. It depends on NAD(+) as a cofactor.

The enzyme catalyses UDP-alpha-D-glucose = UDP-alpha-D-galactose. The protein operates within carbohydrate metabolism; galactose metabolism. In terms of biological role, catalyzes the interconversion between UDP-glucose and UDP-galactose. The chain is UDP-glucose 4-epimerase 2 (UGE-2) from Oryza sativa subsp. japonica (Rice).